Reading from the N-terminus, the 398-residue chain is Dual-specificity RNA methyltransferase RlmN (398 aa).

The active-site Proton acceptor is E119. A Radical SAM core domain is found at 125–364 (EADRATLCVS…TIVRKTRGDD (240 aa)). An intrachain disulfide couples C132 to C369. Residues C139, C143, and C146 each coordinate [4Fe-4S] cluster. S-adenosyl-L-methionine-binding positions include 193–194 (GE), S225, 247–249 (SLH), and N326. The active-site S-methylcysteine intermediate is C369.

Belongs to the radical SAM superfamily. RlmN family. It depends on [4Fe-4S] cluster as a cofactor.

It is found in the cytoplasm. The enzyme catalyses adenosine(2503) in 23S rRNA + 2 reduced [2Fe-2S]-[ferredoxin] + 2 S-adenosyl-L-methionine = 2-methyladenosine(2503) in 23S rRNA + 5'-deoxyadenosine + L-methionine + 2 oxidized [2Fe-2S]-[ferredoxin] + S-adenosyl-L-homocysteine. It carries out the reaction adenosine(37) in tRNA + 2 reduced [2Fe-2S]-[ferredoxin] + 2 S-adenosyl-L-methionine = 2-methyladenosine(37) in tRNA + 5'-deoxyadenosine + L-methionine + 2 oxidized [2Fe-2S]-[ferredoxin] + S-adenosyl-L-homocysteine. In terms of biological role, specifically methylates position 2 of adenine 2503 in 23S rRNA and position 2 of adenine 37 in tRNAs. m2A2503 modification seems to play a crucial role in the proofreading step occurring at the peptidyl transferase center and thus would serve to optimize ribosomal fidelity. The chain is Dual-specificity RNA methyltransferase RlmN from Yersinia pseudotuberculosis serotype O:3 (strain YPIII).